Consider the following 368-residue polypeptide: DNA-directed RNA polymerase subunit alpha (368 aa).

The segment at 1 to 231 is alpha N-terminal domain (alpha-NTD); the sequence is MLWKGFQKPK…DHMNIFINFE (231 aa). Positions 243-368 are alpha C-terminal domain (alpha-CTD); the sequence is KPEIRNENLN…GFGGDNNPGF (126 aa).

It belongs to the RNA polymerase alpha chain family. As to quaternary structure, homodimer. The RNAP catalytic core consists of 2 alpha, 1 beta, 1 beta' and 1 omega subunit. When a sigma factor is associated with the core the holoenzyme is formed, which can initiate transcription.

It carries out the reaction RNA(n) + a ribonucleoside 5'-triphosphate = RNA(n+1) + diphosphate. DNA-dependent RNA polymerase catalyzes the transcription of DNA into RNA using the four ribonucleoside triphosphates as substrates. The sequence is that of DNA-directed RNA polymerase subunit alpha from Koribacter versatilis (strain Ellin345).